We begin with the raw amino-acid sequence, 67 residues long: Large ribosomal subunit protein uL29 (67 aa).

Belongs to the universal ribosomal protein uL29 family.

The protein is Large ribosomal subunit protein uL29 of Cereibacter sphaeroides (strain ATCC 17025 / ATH 2.4.3) (Rhodobacter sphaeroides).